We begin with the raw amino-acid sequence, 353 residues long: S-adenosylmethionine:tRNA ribosyltransferase-isomerase (353 aa).

The protein belongs to the QueA family. Monomer.

It is found in the cytoplasm. The catalysed reaction is 7-aminomethyl-7-carbaguanosine(34) in tRNA + S-adenosyl-L-methionine = epoxyqueuosine(34) in tRNA + adenine + L-methionine + 2 H(+). The protein operates within tRNA modification; tRNA-queuosine biosynthesis. Transfers and isomerizes the ribose moiety from AdoMet to the 7-aminomethyl group of 7-deazaguanine (preQ1-tRNA) to give epoxyqueuosine (oQ-tRNA). This chain is S-adenosylmethionine:tRNA ribosyltransferase-isomerase, found in Rickettsia bellii (strain OSU 85-389).